Reading from the N-terminus, the 403-residue chain is Pyruvate, phosphate dikinase regulatory protein 1, chloroplastic (403 aa).

The transit peptide at 1–86 directs the protein to the chloroplast; sequence MALLSAMKLQ…NTTGPMRPIE (86 aa). The interval 1 to 108 is disordered; the sequence is MALLSAMKLQ…DVSSSSNGVS (108 aa). Composition is skewed to low complexity over residues 17 to 26, 69 to 80, and 87 to 108; these read SSNLNPNSKP, STITNGSNNTTG, and SSSR…NGVS. 269 to 276 is a binding site for ADP; the sequence is GVSRTGKT.

The protein belongs to the pyruvate, phosphate/water dikinase regulatory protein family. PDRP subfamily. Interacts with PPDK1. As to expression, expressed in green tissues.

The protein resides in the plastid. It is found in the chloroplast stroma. It catalyses the reaction N(tele)-phospho-L-histidyl/L-threonyl-[pyruvate, phosphate dikinase] + ADP = N(tele)-phospho-L-histidyl/O-phospho-L-threonyl-[pyruvate, phosphate dikinase] + AMP + H(+). The enzyme catalyses N(tele)-phospho-L-histidyl/O-phospho-L-threonyl-[pyruvate, phosphate dikinase] + phosphate + H(+) = N(tele)-phospho-L-histidyl/L-threonyl-[pyruvate, phosphate dikinase] + diphosphate. Regulated by light/dark exposure. Its function is as follows. Bifunctional serine/threonine kinase and phosphorylase involved in the dark/light-mediated regulation of PPDK by catalyzing its phosphorylation/dephosphorylation. Dark/light-induced changes in stromal concentrations of the competing ADP and Pi substrates govern the direction of the reaction. In the dark, phosphorylates the catalytic intermediate of PPDK (PPDK-HisP), inactivating it. Light exposure induces the phosphorolysis reaction that reactivates PPDK. Unlike the kinase function which can utilize either Thr or Ser as target, the phosphorylase function has a strict substrate requirement for threonyl phosphate. The sequence is that of Pyruvate, phosphate dikinase regulatory protein 1, chloroplastic (RP1) from Arabidopsis thaliana (Mouse-ear cress).